Consider the following 306-residue polypeptide: Ribonuclease Z (306 aa).

7 residues coordinate Zn(2+): H63, H65, D67, H68, H141, D211, and H269. The active-site Proton acceptor is D67.

The protein belongs to the RNase Z family. Homodimer. The cofactor is Zn(2+).

It catalyses the reaction Endonucleolytic cleavage of RNA, removing extra 3' nucleotides from tRNA precursor, generating 3' termini of tRNAs. A 3'-hydroxy group is left at the tRNA terminus and a 5'-phosphoryl group is left at the trailer molecule.. In terms of biological role, zinc phosphodiesterase, which displays some tRNA 3'-processing endonuclease activity. Probably involved in tRNA maturation, by removing a 3'-trailer from precursor tRNA. The polypeptide is Ribonuclease Z (Staphylococcus saprophyticus subsp. saprophyticus (strain ATCC 15305 / DSM 20229 / NCIMB 8711 / NCTC 7292 / S-41)).